We begin with the raw amino-acid sequence, 461 residues long: Bifunctional protein GlmU (461 aa).

A pyrophosphorylase region spans residues 1-235; it reads MKAIILAAGL…ITEIFGVNDR (235 aa). Residues 6 to 9, lysine 20, glutamine 71, and 77 to 78 contribute to the UDP-N-acetyl-alpha-D-glucosamine site; these read LAAG and GT. Aspartate 102 contacts Mg(2+). Residues glycine 145, glutamate 160, asparagine 175, and asparagine 233 each contribute to the UDP-N-acetyl-alpha-D-glucosamine site. Mg(2+) is bound at residue asparagine 233. Residues 236 to 256 form a linker region; that stretch reads WELSFAESVIKMRILENLARS. Residues 257–461 form an N-acetyltransferase region; sequence GVTIHSPESV…LEDKSKVKDE (205 aa). Arginine 339 and lysine 357 together coordinate UDP-N-acetyl-alpha-D-glucosamine. Residue histidine 369 is the Proton acceptor of the active site. Residues tyrosine 372 and asparagine 383 each coordinate UDP-N-acetyl-alpha-D-glucosamine. Acetyl-CoA-binding residues include alanine 386, serine 411, glycine 429, and arginine 446.

The protein in the N-terminal section; belongs to the N-acetylglucosamine-1-phosphate uridyltransferase family. In the C-terminal section; belongs to the transferase hexapeptide repeat family. As to quaternary structure, homotrimer. The cofactor is Mg(2+).

It localises to the cytoplasm. It catalyses the reaction alpha-D-glucosamine 1-phosphate + acetyl-CoA = N-acetyl-alpha-D-glucosamine 1-phosphate + CoA + H(+). It carries out the reaction N-acetyl-alpha-D-glucosamine 1-phosphate + UTP + H(+) = UDP-N-acetyl-alpha-D-glucosamine + diphosphate. It participates in nucleotide-sugar biosynthesis; UDP-N-acetyl-alpha-D-glucosamine biosynthesis; N-acetyl-alpha-D-glucosamine 1-phosphate from alpha-D-glucosamine 6-phosphate (route II): step 2/2. It functions in the pathway nucleotide-sugar biosynthesis; UDP-N-acetyl-alpha-D-glucosamine biosynthesis; UDP-N-acetyl-alpha-D-glucosamine from N-acetyl-alpha-D-glucosamine 1-phosphate: step 1/1. Its pathway is bacterial outer membrane biogenesis; LPS lipid A biosynthesis. Functionally, catalyzes the last two sequential reactions in the de novo biosynthetic pathway for UDP-N-acetylglucosamine (UDP-GlcNAc). The C-terminal domain catalyzes the transfer of acetyl group from acetyl coenzyme A to glucosamine-1-phosphate (GlcN-1-P) to produce N-acetylglucosamine-1-phosphate (GlcNAc-1-P), which is converted into UDP-GlcNAc by the transfer of uridine 5-monophosphate (from uridine 5-triphosphate), a reaction catalyzed by the N-terminal domain. The chain is Bifunctional protein GlmU from Hydrogenobaculum sp. (strain Y04AAS1).